The sequence spans 294 residues: 4-hydroxy-tetrahydrodipicolinate synthase (294 aa).

Residue Thr46 coordinates pyruvate. Catalysis depends on Tyr135, which acts as the Proton donor/acceptor. Lys164 acts as the Schiff-base intermediate with substrate in catalysis. A pyruvate-binding site is contributed by Ile205.

Belongs to the DapA family. As to quaternary structure, homotetramer; dimer of dimers.

It localises to the cytoplasm. It carries out the reaction L-aspartate 4-semialdehyde + pyruvate = (2S,4S)-4-hydroxy-2,3,4,5-tetrahydrodipicolinate + H2O + H(+). The protein operates within amino-acid biosynthesis; L-lysine biosynthesis via DAP pathway; (S)-tetrahydrodipicolinate from L-aspartate: step 3/4. Its function is as follows. Catalyzes the condensation of (S)-aspartate-beta-semialdehyde [(S)-ASA] and pyruvate to 4-hydroxy-tetrahydrodipicolinate (HTPA). This chain is 4-hydroxy-tetrahydrodipicolinate synthase, found in Nitratiruptor sp. (strain SB155-2).